A 72-amino-acid polypeptide reads, in one-letter code: Metallothionein-like protein 1 (72 aa).

Belongs to the metallothionein superfamily. Type 15 family.

Functionally, metallothioneins have a high content of cysteine residues that bind various heavy metals. The polypeptide is Metallothionein-like protein 1 (Erythranthe guttata (Yellow monkey flower)).